The chain runs to 473 residues: Cysteine--tRNA ligase (473 aa).

C27 is a Zn(2+) binding site. Positions 29–39 (ITPYDHVHVGH) match the 'HIGH' region motif. Residues C213, H238, and E242 each contribute to the Zn(2+) site. A 'KMSKS' region motif is present at residues 271–275 (KMSKS). K274 is a binding site for ATP.

This sequence belongs to the class-I aminoacyl-tRNA synthetase family. Requires Zn(2+) as cofactor.

Its subcellular location is the cytoplasm. It carries out the reaction tRNA(Cys) + L-cysteine + ATP = L-cysteinyl-tRNA(Cys) + AMP + diphosphate. The chain is Cysteine--tRNA ligase from Pyrobaculum calidifontis (strain DSM 21063 / JCM 11548 / VA1).